A 70-amino-acid polypeptide reads, in one-letter code: MPKEIKEIKDFLVKARRKDAKSVKIKKNSNNTKFKVRCASYLYTLVVADKDKAEKLKQSLPPGIQVKELK.

It belongs to the eukaryotic ribosomal protein eL38 family.

This is Large ribosomal subunit protein eL38 (rpl-38) from Caenorhabditis elegans.